Here is a 67-residue protein sequence, read N- to C-terminus: Transcription elongation factor Spt4 (67 aa).

4 residues coordinate Zn(2+): C7, C10, C19, and C22.

The protein belongs to the archaeal Spt4 family. As to quaternary structure, heterodimer composed of Spt4 and Spt5. Interacts with RNA polymerase (RNAP). The complex interacts with FttA.

The protein resides in the chromosome. The Stp4-Spt5 complex stimulates transcription elongation on both naked DNA and histone-bound DNA (chromatin), facilitating transcription through the histone barrier. Neither protein functions alone. The complex also stimulates the transcription termination activity of FttA, neither protein alone stimulates FttA-dependent termination. The sequence is that of Transcription elongation factor Spt4 from Thermococcus kodakarensis (strain ATCC BAA-918 / JCM 12380 / KOD1) (Pyrococcus kodakaraensis (strain KOD1)).